The primary structure comprises 224 residues: uncharacterized protein (224 aa).

The 68-residue stretch at 10–77 folds into the HTH gntR-type domain; the sequence is TPYYLQFYNQ…DRNGFSITSL (68 aa). The H-T-H motif DNA-binding region spans 37–56; it reads ETQLAKSFGVSRSPIREAMR.

This is an uncharacterized protein from Bacillus subtilis (strain 168).